The following is a 277-amino-acid chain: Uridine-cytidine kinase 1 (277 aa).

Residues 1 to 10 are compositionally biased toward gly residues; that stretch reads MASAGGGDCE. The disordered stretch occupies residues 1–29; the sequence is MASAGGGDCEGAGPEADRPHQRPFLIGVS. 30 to 38 is a binding site for ATP; sequence GGTASGKST. Asp-87, Tyr-115, His-120, Arg-169, Arg-178, and Gln-186 together coordinate substrate. Asp-215 lines the ATP pocket. The segment at 246–277 is disordered; the sequence is RSHKRTFPEPGEHPAVLASGKRSHLESSSRPH. A Phosphothreonine modification is found at Thr-251. The span at 268 to 277 shows a compositional bias: basic and acidic residues; the sequence is SHLESSSRPH.

The protein belongs to the uridine kinase family.

The catalysed reaction is uridine + ATP = UMP + ADP + H(+). The enzyme catalyses cytidine + ATP = CMP + ADP + H(+). It participates in pyrimidine metabolism; CTP biosynthesis via salvage pathway; CTP from cytidine: step 1/3. The protein operates within pyrimidine metabolism; UMP biosynthesis via salvage pathway; UMP from uridine: step 1/1. Functionally, phosphorylates uridine and cytidine to uridine monophosphate and cytidine monophosphate. Does not phosphorylate deoxyribonucleosides or purine ribonucleosides. Can use ATP or GTP as a phosphate donor. The chain is Uridine-cytidine kinase 1 (UCK1) from Bos taurus (Bovine).